The chain runs to 332 residues: Melanocortin receptor 4 (332 aa).

At 1–43 the chain is on the extracellular side; it reads MNSTQPLGMHTSLHSWNRSAHGMPTNVSESLAKGYSDGGCYEQ. N-linked (GlcNAc...) asparagine glycosylation is found at asparagine 2, asparagine 17, and asparagine 26. Cystine bridges form between cysteine 40-cysteine 279 and cysteine 271-cysteine 277. Residues 44–69 form a helical membrane-spanning segment; the sequence is LFVSPEVFVTLGVISLLENILVIVAI. Residues 70–81 are Cytoplasmic-facing; it reads AKNKNLHSPMYF. Residues 82–106 traverse the membrane as a helical segment; the sequence is FICSLAVADMLVSVSNGSETIVITL. Residues glutamate 100, aspartate 122, and aspartate 126 each coordinate Ca(2+). Topologically, residues 107 to 123 are extracellular; that stretch reads LNSTDTDAQSFTVDIDN. The chain crosses the membrane as a helical span at residues 124–145; that stretch reads VIDSVICSSLLASICSLLSIAV. The Cytoplasmic segment spans residues 146-165; it reads DRYFTIFYALQYHNIMTVKR. Residues 166 to 186 form a helical membrane-spanning segment; the sequence is VAITISAIWAACTVSGVLFII. Residues 187–191 lie on the Extracellular side of the membrane; that stretch reads YSDSS. Residues 192-215 form a helical membrane-spanning segment; it reads AVIICLITVFFTMLALMASLYVHM. The Cytoplasmic segment spans residues 216–248; sequence FLMARLHIKRIAVLPGSGTIRQGANMKGAITLT. The helical transmembrane segment at 249 to 271 threads the bilayer; that stretch reads ILIGVFVVCWAPFFLHLIFYISC. The Extracellular segment spans residues 272 to 280; it reads PQNPYCVCF. A helical membrane pass occupies residues 281–304; sequence MSHFNLYLILIMCNSIIDPLIYAL. Topologically, residues 305–332 are cytoplasmic; sequence RSQELRKTFKEIICCSPLGGLCDLSSRY. Cysteine 318 carries S-palmitoyl cysteine lipidation.

It belongs to the G-protein coupled receptor 1 family. As to quaternary structure, homodimer; disulfide-linked, also forms higher order oligomers. Interacts with GNAS. Interacts with ATRNL1. Interacts with MGRN1; this interaction competes with GNAS-binding and thus inhibits agonist-induced cAMP production. Interacts with MRAP and MRAP2; these associated factors increase ligand-sensitivity and generation of cAMP.

The protein resides in the cell membrane. Hormone receptor that acts as a key component of the leptin-melanocortin pathway at the intersection of homeostatic maintenance of energetic state. Plays a role in regulating food intake: activation by a stimulating hormone such as anorexigenic alpha-melanocyte stimulating hormone (alpha-MSH) inhibits appetite, whereas binding to a natural antagonist like Agouti-related protein/AGRP promotes appetite. G-protein-coupled receptor that activates conventional Galphas signaling leading to induction of anorexogenic signaling in the hypothalamus to result in negative energy balance. Regulates the firing activity of neurons from the hypothalamus by alpha-MSH and AGRP independently of Galphas signaling by ligand-induced coupling of closure of inwardly rectifying potassium channel KCNJ13. In intestinal epithelial cells, plays a role in the inhibition of hepatic glucose production via nesfatin-1/NUCB2 leading to increased cyclic adenosine monophosphate (cAMP) levels and glucagon-like peptide 1 (GLP-1) secretion in the intestinal epithelium. The protein is Melanocortin receptor 4 (MC4R) of Bos taurus (Bovine).